A 181-amino-acid polypeptide reads, in one-letter code: Biofilm-surface layer protein A (181 aa).

The signal sequence occupies residues 1–28 (MKRKLLSSLAISALSLGLLVSAPTASFA).

The protein belongs to the BslA/BslB family. Forms polymers.

It localises to the secreted. The protein resides in the cell wall. In terms of biological role, involved in biofilm formation. Self-polymerizes and forms a layer on the surface of biofilms that confers hydrophobicity to the biofilm. The layer is stable and capable of resistance to high mechanical force compression. Required for complex colony architecture. May function synergistically with exopolysaccharides and TasA amyloid fibers to facilitate the assembly of the biofilm matrix. The sequence is that of Biofilm-surface layer protein A from Bacillus subtilis (strain 168).